The following is a 294-amino-acid chain: 4-hydroxy-tetrahydrodipicolinate synthase (294 aa).

Position 44 (threonine 44) interacts with pyruvate. Catalysis depends on tyrosine 132, which acts as the Proton donor/acceptor. Catalysis depends on lysine 161, which acts as the Schiff-base intermediate with substrate. Pyruvate is bound at residue isoleucine 206.

Belongs to the DapA family. As to quaternary structure, homotetramer; dimer of dimers.

It is found in the cytoplasm. The catalysed reaction is L-aspartate 4-semialdehyde + pyruvate = (2S,4S)-4-hydroxy-2,3,4,5-tetrahydrodipicolinate + H2O + H(+). Its pathway is amino-acid biosynthesis; L-lysine biosynthesis via DAP pathway; (S)-tetrahydrodipicolinate from L-aspartate: step 3/4. Functionally, catalyzes the condensation of (S)-aspartate-beta-semialdehyde [(S)-ASA] and pyruvate to 4-hydroxy-tetrahydrodipicolinate (HTPA). The polypeptide is 4-hydroxy-tetrahydrodipicolinate synthase (Thermotoga petrophila (strain ATCC BAA-488 / DSM 13995 / JCM 10881 / RKU-1)).